Reading from the N-terminus, the 164-residue chain is Peptide deformylase-like (164 aa).

E134 is a catalytic residue.

It belongs to the polypeptide deformylase family.

The protein is Peptide deformylase-like of Brucella melitensis biotype 1 (strain ATCC 23456 / CCUG 17765 / NCTC 10094 / 16M).